The sequence spans 117 residues: Transcription elongation factor SPT4 (117 aa).

Residues 1-40 form an interaction with SUPT5H region; that stretch reads MSLETVPKDLRHLRACLLCSLVKTIDQFEYDGCDNCESYL. The C4-type zinc finger occupies 16-36; it reads CLLCSLVKTIDQFEYDGCDNC.

It belongs to the SPT4 family. As to quaternary structure, interacts with SUPT5H to form the DSIF complex. DSIF interacts with RNA polymerase II and with the positive transcription elongation factor b complex (P-TEFb complex), which is composed of CDK9 and cyclin-T.

The protein resides in the nucleus. May function as a component of the DRB sensitivity-inducing factor complex (DSIF complex), which regulates transcription elongation by RNA polymerase II. Probably enhances transcriptional pausing at sites proximal to the promoter, which may facilitate the assembly of an elongation competent RNA polymerase II complex. Also acts to stimulate transcriptional elongation at low nucleotide concentrations. Regulation of transcriptional elongation by this protein is required for the expression of genes which control neuronal development. The chain is Transcription elongation factor SPT4 (supt4h1) from Danio rerio (Zebrafish).